The chain runs to 504 residues: Glycerol kinase (504 aa).

Residue Thr-12 coordinates ADP. Residues Thr-12, Thr-13, and Ser-14 each contribute to the ATP site. Thr-12 contacts sn-glycerol 3-phosphate. ADP is bound at residue Arg-16. Arg-82, Glu-83, Tyr-134, and Asp-246 together coordinate sn-glycerol 3-phosphate. Glycerol is bound by residues Arg-82, Glu-83, Tyr-134, Asp-246, and Gln-247. Residues Thr-268 and Gly-312 each coordinate ADP. Residues Thr-268, Gly-312, Gln-316, and Gly-413 each coordinate ATP. Positions 413 and 417 each coordinate ADP.

It belongs to the FGGY kinase family.

The enzyme catalyses glycerol + ATP = sn-glycerol 3-phosphate + ADP + H(+). The protein operates within polyol metabolism; glycerol degradation via glycerol kinase pathway; sn-glycerol 3-phosphate from glycerol: step 1/1. Its activity is regulated as follows. Inhibited by fructose 1,6-bisphosphate (FBP). Functionally, key enzyme in the regulation of glycerol uptake and metabolism. Catalyzes the phosphorylation of glycerol to yield sn-glycerol 3-phosphate. The chain is Glycerol kinase from Pseudarthrobacter chlorophenolicus (strain ATCC 700700 / DSM 12829 / CIP 107037 / JCM 12360 / KCTC 9906 / NCIMB 13794 / A6) (Arthrobacter chlorophenolicus).